Reading from the N-terminus, the 95-residue chain is Aspartyl/glutamyl-tRNA(Asn/Gln) amidotransferase subunit C (95 aa).

Belongs to the GatC family. In terms of assembly, heterotrimer of A, B and C subunits.

It carries out the reaction L-glutamyl-tRNA(Gln) + L-glutamine + ATP + H2O = L-glutaminyl-tRNA(Gln) + L-glutamate + ADP + phosphate + H(+). It catalyses the reaction L-aspartyl-tRNA(Asn) + L-glutamine + ATP + H2O = L-asparaginyl-tRNA(Asn) + L-glutamate + ADP + phosphate + 2 H(+). In terms of biological role, allows the formation of correctly charged Asn-tRNA(Asn) or Gln-tRNA(Gln) through the transamidation of misacylated Asp-tRNA(Asn) or Glu-tRNA(Gln) in organisms which lack either or both of asparaginyl-tRNA or glutaminyl-tRNA synthetases. The reaction takes place in the presence of glutamine and ATP through an activated phospho-Asp-tRNA(Asn) or phospho-Glu-tRNA(Gln). In Chlorobaculum tepidum (strain ATCC 49652 / DSM 12025 / NBRC 103806 / TLS) (Chlorobium tepidum), this protein is Aspartyl/glutamyl-tRNA(Asn/Gln) amidotransferase subunit C.